The following is a 379-amino-acid chain: Homoserine O-succinyltransferase (379 aa).

One can recognise an AB hydrolase-1 domain in the interval 51–360 (NAVLICHALS…DSPYGHDAFL (310 aa)). The active-site Nucleophile is the Ser157. Residue Arg227 participates in substrate binding. Active-site residues include Asp323 and His356. Asp357 serves as a coordination point for substrate.

Belongs to the AB hydrolase superfamily. MetX family. Homodimer.

The protein localises to the cytoplasm. It carries out the reaction L-homoserine + succinyl-CoA = O-succinyl-L-homoserine + CoA. The protein operates within amino-acid biosynthesis; L-methionine biosynthesis via de novo pathway; O-succinyl-L-homoserine from L-homoserine: step 1/1. Transfers a succinyl group from succinyl-CoA to L-homoserine, forming succinyl-L-homoserine. The sequence is that of Homoserine O-succinyltransferase from Pseudomonas putida (strain W619).